The sequence spans 302 residues: Deoxyhypusine hydroxylase (302 aa).

Methionine 1 is subject to N-acetylmethionine. HEAT-like PBS-type repeat units follow at residues 54–80 (LKHE…VLQD), 87–113 (VRHE…YSTD), 175–201 (ERYR…GLQC), 206–232 (FRHE…TLAR), and 239–265 (VRHE…HIED). Fe cation contacts are provided by histidine 56, histidine 89, and glutamate 90. Fe cation is bound by residues histidine 208, histidine 241, and glutamate 242.

Belongs to the deoxyhypusine hydroxylase family. It depends on Fe(2+) as a cofactor.

The enzyme catalyses [eIF5A protein]-deoxyhypusine + AH2 + O2 = [eIF5A protein]-hypusine + A + H2O. The protein operates within protein modification; eIF5A hypusination. Functionally, catalyzes the hydroxylation of the N(6)-(4-aminobutyl)-L-lysine intermediate produced by deoxyhypusine synthase/DHPS on a critical lysine of the eukaryotic translation initiation factor 5A/eIF-5A. This is the second step of the post-translational modification of that lysine into an unusual amino acid residue named hypusine. Hypusination is unique to mature eIF-5A factor and is essential for its function. This Mus musculus (Mouse) protein is Deoxyhypusine hydroxylase.